The sequence spans 239 residues: Uridylate kinase (239 aa).

10–13 is an ATP binding site; sequence KLSG. Residues 18–23 form an involved in allosteric activation by GTP region; the sequence is GEQGYG. Glycine 52 contributes to the UMP binding site. The ATP site is built by glycine 53 and arginine 57. UMP contacts are provided by residues aspartate 72 and 133–140; that span reads TGNPYFST. ATP-binding residues include asparagine 161, tyrosine 167, and glutamate 170.

Belongs to the UMP kinase family. In terms of assembly, homohexamer.

It localises to the cytoplasm. It carries out the reaction UMP + ATP = UDP + ADP. It functions in the pathway pyrimidine metabolism; CTP biosynthesis via de novo pathway; UDP from UMP (UMPK route): step 1/1. Its activity is regulated as follows. Allosterically activated by GTP. Inhibited by UTP. In terms of biological role, catalyzes the reversible phosphorylation of UMP to UDP. The sequence is that of Uridylate kinase from Halalkalibacterium halodurans (strain ATCC BAA-125 / DSM 18197 / FERM 7344 / JCM 9153 / C-125) (Bacillus halodurans).